The following is a 23-amino-acid chain: U1-ctenitoxin-Co1a (23 aa).

Cys10 and Cys20 are joined by a disulfide.

In terms of tissue distribution, expressed by the venom gland.

It localises to the secreted. Insecticidal neurotoxin that reversibly inhibits the N-methyl-D-aspartate (NMDA)-subtype of ionotropic glutamate receptor (GRIN) and inhibits inactivation of insect sodium channels (Nav). In vivo, is highly toxic to insects. This chain is U1-ctenitoxin-Co1a, found in Ctenus ornatus (Brazilian spider).